A 257-amino-acid polypeptide reads, in one-letter code: Membrane protein insertase YidC 1 (257 aa).

The N-terminal stretch at 1-20 (MYRKFGMAAMLVSILLLMTG) is a signal peptide. A lipid anchor (N-palmitoyl cysteine) is attached at Cys-21. Cys-21 carries the S-diacylglycerol cysteine lipid modification. Helical transmembrane passes span 35–55 (IWDS…ANAF), 59–79 (FGLA…PLMI), 129–149 (LAGC…YHAI), 160–180 (FLWF…AGIT), and 205–225 (VMIL…WVIG).

This sequence belongs to the OXA1/ALB3/YidC family. Type 2 subfamily.

The protein localises to the cell membrane. In terms of biological role, required for the insertion and/or proper folding and/or complex formation of integral membrane proteins into the membrane. Involved in integration of membrane proteins that insert both dependently and independently of the Sec translocase complex, as well as at least some lipoproteins. This chain is Membrane protein insertase YidC 1, found in Halalkalibacterium halodurans (strain ATCC BAA-125 / DSM 18197 / FERM 7344 / JCM 9153 / C-125) (Bacillus halodurans).